The primary structure comprises 167 residues: Protein-export protein SecB (167 aa).

The protein belongs to the SecB family. As to quaternary structure, homotetramer, a dimer of dimers. One homotetramer interacts with 1 SecA dimer.

The protein localises to the cytoplasm. In terms of biological role, one of the proteins required for the normal export of preproteins out of the cell cytoplasm. It is a molecular chaperone that binds to a subset of precursor proteins, maintaining them in a translocation-competent state. It also specifically binds to its receptor SecA. This is Protein-export protein SecB from Cellvibrio japonicus (strain Ueda107) (Pseudomonas fluorescens subsp. cellulosa).